A 118-amino-acid chain; its full sequence is Large ribosomal subunit protein bL20 (118 aa).

Belongs to the bacterial ribosomal protein bL20 family.

Its function is as follows. Binds directly to 23S ribosomal RNA and is necessary for the in vitro assembly process of the 50S ribosomal subunit. It is not involved in the protein synthesizing functions of that subunit. In Hydrogenovibrio crunogenus (strain DSM 25203 / XCL-2) (Thiomicrospira crunogena), this protein is Large ribosomal subunit protein bL20.